A 268-amino-acid chain; its full sequence is Tryptophan synthase alpha chain (268 aa).

Catalysis depends on proton acceptor residues glutamate 49 and aspartate 60.

Belongs to the TrpA family. As to quaternary structure, tetramer of two alpha and two beta chains.

It catalyses the reaction (1S,2R)-1-C-(indol-3-yl)glycerol 3-phosphate + L-serine = D-glyceraldehyde 3-phosphate + L-tryptophan + H2O. Its pathway is amino-acid biosynthesis; L-tryptophan biosynthesis; L-tryptophan from chorismate: step 5/5. Functionally, the alpha subunit is responsible for the aldol cleavage of indoleglycerol phosphate to indole and glyceraldehyde 3-phosphate. This is Tryptophan synthase alpha chain from Shigella dysenteriae serotype 1 (strain Sd197).